Reading from the N-terminus, the 83-residue chain is Small ribosomal subunit protein bS20 (83 aa).

Belongs to the bacterial ribosomal protein bS20 family.

Binds directly to 16S ribosomal RNA. The protein is Small ribosomal subunit protein bS20 of Amoebophilus asiaticus (strain 5a2).